The following is a 271-amino-acid chain: GPN-loop GTPase 3 (271 aa).

13 to 18 (GAGKST) serves as a coordination point for GTP. Residues 70–72 (GPN) carry the Gly-Pro-Asn (GPN)-loop; involved in dimer interface motif. 173-176 (SKLD) serves as a coordination point for GTP.

This sequence belongs to the GPN-loop GTPase family. Heterodimers with GPN1 or GPN2. Binds to RNA polymerase II (RNAPII).

In terms of biological role, small GTPase required for proper nuclear import of RNA polymerase II and III (RNAPII and RNAPIII). May act at an RNAP assembly step prior to nuclear import. The polypeptide is GPN-loop GTPase 3 (Candida glabrata (strain ATCC 2001 / BCRC 20586 / JCM 3761 / NBRC 0622 / NRRL Y-65 / CBS 138) (Yeast)).